The chain runs to 450 residues: Tubulin alpha-5 chain (450 aa).

The GTP site is built by Gln-11, Glu-71, Gly-144, Thr-145, Thr-179, Asn-206, and Asn-228. Glu-71 lines the Mg(2+) pocket. Glu-254 is an active-site residue.

Belongs to the tubulin family. As to quaternary structure, dimer of alpha and beta chains. A typical microtubule is a hollow water-filled tube with an outer diameter of 25 nm and an inner diameter of 15 nM. Alpha-beta heterodimers associate head-to-tail to form protofilaments running lengthwise along the microtubule wall with the beta-tubulin subunit facing the microtubule plus end conferring a structural polarity. Microtubules usually have 13 protofilaments but different protofilament numbers can be found in some organisms and specialized cells. It depends on Mg(2+) as a cofactor. In terms of processing, undergoes a tyrosination/detyrosination cycle, the cyclic removal and re-addition of a C-terminal tyrosine residue by the enzymes tubulin tyrosine carboxypeptidase (TTCP) and tubulin tyrosine ligase (TTL), respectively.

It localises to the cytoplasm. The protein resides in the cytoskeleton. The enzyme catalyses GTP + H2O = GDP + phosphate + H(+). Tubulin is the major constituent of microtubules, a cylinder consisting of laterally associated linear protofilaments composed of alpha- and beta-tubulin heterodimers. Microtubules grow by the addition of GTP-tubulin dimers to the microtubule end, where a stabilizing cap forms. Below the cap, tubulin dimers are in GDP-bound state, owing to GTPase activity of alpha-tubulin. The sequence is that of Tubulin alpha-5 chain (TUBA5) from Zea mays (Maize).